The chain runs to 7214 residues: Nonribosomal peptide synthetase atnA (7214 aa).

Residues 257 to 651 (ERKALEQPHA…VGRKDTQVKI (395 aa)) are adenylation 1. The 77-residue stretch at 786–862 (EPVTETEKAV…AMSQIAVELS (77 aa)) folds into the Carrier 1 domain. O-(pantetheine 4'-phosphoryl)serine is present on Ser823. A condensation 1 region spans residues 899–1318 (EDAYPATALQ…LVSQKDYTQI (420 aa)). The interval 1340-1735 (QVLATPDAPA…ARKDTQAKVR (396 aa)) is adenylation 2. The region spanning 1877-1953 (QPTSDIEKKV…ALAGRAQYIE (77 aa)) is the Carrier 2 domain. Ser1914 carries the O-(pantetheine 4'-phosphoryl)serine modification. Positions 1962–2384 (PEAEVIDEWF…RQVLETGIDE (423 aa)) are epimerization. The interval 2431–2845 (SPCSPMQLGL…MLSPLDRASL (415 aa)) is condensation 2. The adenylation 3 stretch occupies residues 2866–3262 (QNARKRPHAL…VGRKDTQVKV (397 aa)). In terms of domain architecture, Carrier 3 spans 3398-3472 (ALETPMEETI…DMARIVVAAY (75 aa)). Ser3433 carries the post-translational modification O-(pantetheine 4'-phosphoryl)serine. Residues 3510–3904 (VEDVYPSTSL…QLCENEDGRL (395 aa)) are condensation 3. An adenylation 4 region spans residues 3943 to 4339 (ERARLHPDLL…VGRKDSQVKL (397 aa)). A Carrier 4 domain is found at 4476-4552 (VPGSEAEKVI…ELAGRVTSIS (77 aa)). The residue at position 4513 (Ser4513) is an O-(pantetheine 4'-phosphoryl)serine. A condensation 4 region spans residues 4601–5033 (VEDVYPCSPL…TSAAMRAQLL (433 aa)). An adenylation 5 region spans residues 5051 to 5446 (FHRTALRYPE…VGRKDTQIKF (396 aa)). The disordered stretch occupies residues 5489–5515 (FITTEGGSGHENKGSPSLKGSSGDPVS). The Carrier 5 domain occupies 5591 to 5667 (APRTAMEKRL…QMANIVARNA (77 aa)). Ser5628 bears the O-(pantetheine 4'-phosphoryl)serine mark. Positions 5707 to 6123 (QDVYPCTPLQ…HLLGDNEIKM (417 aa)) are condensation 5. The interval 6145–6543 (ERAVLQPEAI…GRKDTQIKLR (399 aa)) is adenylation 6. The region spanning 6683–6766 (DPADKLALAL…DVARMIEHGN (84 aa)) is the Carrier 6 domain. Position 6725 is an O-(pantetheine 4'-phosphoryl)serine (Ser6725). A thioesterase (TE) domain region spans residues 6814-7194 (ILLTGATGFL…KSISYMRQIG (381 aa)). Residues 6895 to 6915 (STVEGRDHPGSESGSTAGPAE) are disordered.

The protein belongs to the NRP synthetase family.

It functions in the pathway secondary metabolite biosynthesis. Nonribosomal peptide synthetase; part of the gene cluster that mediates the biosynthesis of aspercryptins, linear lipopeptides built from six amino acids including 2 highly unusual and nonproteogenic amino acids, 2-amino-octanoic acid (2aoa) and 2-amino-dodecanol (2adol). The core structure of aspercryptins is as follows: Ser/Ala-Thr-Ile/Val-2aoa-Asn-2adol. The first step of aspercryptin biosynthesis is the generation of the fatty acid precursors, octanoic and dodecanoic acids, by the FAS subunits atnF and atnM. The fatty acid precursors are likely transformed into the corresponding alpha-amino fatty acids in three steps. First, they are hydroxylated by the cytochrome P450 monooxygenase atnE, then oxidized to the corresponding alpha-keto acids by the NAD(P)-dependent oxidoreductase atnD, and finally converted to the alpha-amino fatty acids by the PLP-dependent aminotransferases atnH or atnJ. the alpha-amino fatty acids, 2-amino-octanoic and 2-amino-dodecanoic acids, are recognized, activated, and covalently tethered to the NRPS atnA by its fourth and sixth adenylation domains. The second module of atnA is the Thr module and contains an epimerase (E) domain responsible for the epimerization of Thr to D-allo-Thr. Additionally, despite atnA having only one epimerase domain, the first amino acid of aspercryptin A1 is D-Ser, suggesting that serine is either loaded directly as D-Ser on the first module or that the epimerase domain in the threonine module epimerizes both L-Ser and L-Thr. After condensation of the hexapeptide of aspercryptin, the C-terminal reductase (TE) domain might be involved in the reductive release and production of the aldehyde hexapeptide. Further reduction would generate aspercryptins. The variety of aspercryptins produced reflects the flexibility of the atnA NRPS, allowing incorporation of alanine instead of serine, valine for isoleucine, and a C10 fatty amino alcohol instead of the C12 version. AtnB seems to be involved in the selectivity for Ile versus Val by the third module. Moreover, type B, C and D aspercryptins have an additional N-terminal cichorine, acetyl and propionyl group respectively. The chain is Nonribosomal peptide synthetase atnA from Emericella nidulans (strain FGSC A4 / ATCC 38163 / CBS 112.46 / NRRL 194 / M139) (Aspergillus nidulans).